Consider the following 536-residue polypeptide: MELMNLASKETSYWMIALPAGFGSQNLHDVSTLGYLFLAVVFLSIVTWALAGGGGVAWKNGRNRLGRVAIPGPRGIPVFGSLFTLSRGLAHRTLAAMAWSRANTEIMAFSLGSTPVIVASEPNIAREILMSPHFADRPVKQSAKSLMFSRAIGFAPNGTYWRMLRRIASTHLFAPRRILAHEAGRQLDCAEMVKAVSVEQNGAGSVVLRKHLQLAALNNIMGSVFGRRYDPLAQKEDLDELTSMVREGFELLGAFNWSDYLPWLGYFYDSIRLNQRCSDLVPRIRTLVKKIIDEHRVSNSEKKRDIGDFVDVLLSLDGDEKLQEDDMIAVLWEMIFRGTDTTALLTEWTMAELVLNPNVQTKLRDEILTAVGDGADGDVADADLAKLPYLNAVVKETLRLHPPGPLLSWARLSTSDVQLSNGMVIPKGTTAMVNMWAITHDQTVWSDPLKFDPERFTGNADMDIRGGDLRLAPFGAGRRVCPGKNMGLATVTRWVAELVRRFEWGQDQTEPVDLGEVLKLSCEMEHPLRAVVTEIF.

The helical transmembrane segment at 36–56 (LFLAVVFLSIVTWALAGGGGV) threads the bilayer. A heme-binding site is contributed by cysteine 481.

Belongs to the cytochrome P450 family. The cofactor is heme.

The protein resides in the membrane. In terms of biological role, functions probably in association with CYP78A5 in regulating relative growth of the shoot apical meristem and plant organs via a non-cell-autonomous signal. This is Cytochrome P450 78A7 (CYP78A7) from Arabidopsis thaliana (Mouse-ear cress).